Consider the following 410-residue polypeptide: Mating-type locus allele B6 protein (410 aa).

The variable domain between B alleles stretch occupies residues Met-1–Tyr-110. A DNA-binding region (homeobox; TALE-type) is located at residues Ala-107–His-184. The interval Arg-111 to Val-410 is highly conserved between B alleles. Disordered stretches follow at residues Arg-202–Asp-224, Thr-278–Leu-335, and Lys-373–Asp-393. Polar residues predominate over residues Leu-205 to Glu-219. The Nuclear localization signal motif lies at Lys-276–Arg-308. The segment covering Gln-294–Ser-307 has biased composition (basic residues). Over residues Pro-312–Leu-335 the composition is skewed to polar residues. A not essential for B6 function region spans residues Pro-333–Val-410. The span at Arg-375 to Gly-388 shows a compositional bias: basic residues.

The protein belongs to the TALE/M-ATYP homeobox family.

It is found in the nucleus. Functionally, the B locus has at least 25 alleles, and any combination of two different B alleles yields a multimeric regulatory protein, that activates genes responsible for the pathogenicity and for the sexual development of the fungus within the corn plant. This is Mating-type locus allele B6 protein from Mycosarcoma maydis (Corn smut fungus).